A 127-amino-acid polypeptide reads, in one-letter code: Small ribosomal subunit protein uS13 (127 aa).

The tract at residues 93 to 127 (RRGMPVRGQRTRTNARTRRGRRGQAIGIKKKATKK) is disordered.

The protein belongs to the universal ribosomal protein uS13 family. As to quaternary structure, part of the 30S ribosomal subunit. Forms a loose heterodimer with protein S19. Forms two bridges to the 50S subunit in the 70S ribosome.

Located at the top of the head of the 30S subunit, it contacts several helices of the 16S rRNA. In the 70S ribosome it contacts the 23S rRNA (bridge B1a) and protein L5 of the 50S subunit (bridge B1b), connecting the 2 subunits; these bridges are implicated in subunit movement. Contacts the tRNAs in the A and P-sites. The polypeptide is Small ribosomal subunit protein uS13 (Chloroflexus aurantiacus (strain ATCC 29366 / DSM 635 / J-10-fl)).